A 239-amino-acid chain; its full sequence is Ribonuclease 3 (239 aa).

The RNase III domain maps to 12–137 (REKVEAVIGY…LIAAIYLDAG (126 aa)). Position 50 (E50) interacts with Mg(2+). D54 is a catalytic residue. D123 and E126 together coordinate Mg(2+). E126 is a catalytic residue. One can recognise a DRBM domain in the interval 162-231 (DAKTELQEWA…ATRLLEREGV (70 aa)).

Belongs to the ribonuclease III family. Homodimer. Requires Mg(2+) as cofactor.

The protein localises to the cytoplasm. It catalyses the reaction Endonucleolytic cleavage to 5'-phosphomonoester.. Digests double-stranded RNA. Involved in the processing of primary rRNA transcript to yield the immediate precursors to the large and small rRNAs (23S and 16S). Processes some mRNAs, and tRNAs when they are encoded in the rRNA operon. Processes pre-crRNA and tracrRNA of type II CRISPR loci if present in the organism. This is Ribonuclease 3 from Allorhizobium ampelinum (strain ATCC BAA-846 / DSM 112012 / S4) (Agrobacterium vitis (strain S4)).